A 528-amino-acid polypeptide reads, in one-letter code: Butyrophilin subfamily 2 member A2 (528 aa).

Positions 1–29 (MESAAALHFSRPASLLLLLLLSLCALVSA) are cleaved as a signal peptide. Residues 30 to 249 (QVTVVGPTDP…SFMPSVSPCA (220 aa)) are Extracellular-facing. The Ig-like V-type domain occupies 31–142 (VTVVGPTDPI…SYDEAILHLI (112 aa)). N-linked (GlcNAc...) asparagine glycans are attached at residues asparagine 47, asparagine 115, and asparagine 121. The cysteines at positions 52 and 126 are disulfide-linked. The 83-residue stretch at 150-232 (PLIEMRGHED…NNTLLSQKKE (83 aa)) folds into the Ig-like C2-type domain. Residues 250 to 270 (VALPIVVVILMILFAVCMYWI) traverse the membrane as a helical segment. Residues 270-320 (INKLQKEKKILSGEKEFERETREIAVKELEKERVQKEEELQVKEKLQEELR) are a coiled coil. The Cytoplasmic portion of the chain corresponds to 271–528 (NKLQKEKKIL…LHRVGTHQSL (258 aa)). The 197-residue stretch at 311–507 (VKEKLQEELR…IFICPALTGA (197 aa)) folds into the B30.2/SPRY domain.

The protein belongs to the immunoglobulin superfamily. BTN/MOG family. In terms of processing, N-glycosylated.

Its subcellular location is the membrane. Its function is as follows. Inhibits the proliferation of CD4 and CD8 T-cells activated by anti-CD3 antibodies, T-cell metabolism and IL2 and IFNG secretion. The sequence is that of Butyrophilin subfamily 2 member A2 (BTN2A2) from Pongo abelii (Sumatran orangutan).